The chain runs to 398 residues: 4-hydroxy-3-methylbut-2-enyl diphosphate reductase (398 aa).

Cys66 serves as a coordination point for [4Fe-4S] cluster. His96 contributes to the (2E)-4-hydroxy-3-methylbut-2-enyl diphosphate binding site. His96 provides a ligand contact to dimethylallyl diphosphate. Isopentenyl diphosphate is bound at residue His96. [4Fe-4S] cluster is bound at residue Cys157. His185 lines the (2E)-4-hydroxy-3-methylbut-2-enyl diphosphate pocket. Position 185 (His185) interacts with dimethylallyl diphosphate. His185 is a binding site for isopentenyl diphosphate. Residue Glu187 is the Proton donor of the active site. Thr250 contributes to the (2E)-4-hydroxy-3-methylbut-2-enyl diphosphate binding site. Cys288 is a [4Fe-4S] cluster binding site. Positions 317, 318, 319, and 379 each coordinate (2E)-4-hydroxy-3-methylbut-2-enyl diphosphate. 4 residues coordinate dimethylallyl diphosphate: Ser317, Ser318, Asn319, and Ser379. Positions 317, 318, 319, and 379 each coordinate isopentenyl diphosphate.

Belongs to the IspH family. [4Fe-4S] cluster is required as a cofactor.

It catalyses the reaction isopentenyl diphosphate + 2 oxidized [2Fe-2S]-[ferredoxin] + H2O = (2E)-4-hydroxy-3-methylbut-2-enyl diphosphate + 2 reduced [2Fe-2S]-[ferredoxin] + 2 H(+). The catalysed reaction is dimethylallyl diphosphate + 2 oxidized [2Fe-2S]-[ferredoxin] + H2O = (2E)-4-hydroxy-3-methylbut-2-enyl diphosphate + 2 reduced [2Fe-2S]-[ferredoxin] + 2 H(+). Its pathway is isoprenoid biosynthesis; dimethylallyl diphosphate biosynthesis; dimethylallyl diphosphate from (2E)-4-hydroxy-3-methylbutenyl diphosphate: step 1/1. The protein operates within isoprenoid biosynthesis; isopentenyl diphosphate biosynthesis via DXP pathway; isopentenyl diphosphate from 1-deoxy-D-xylulose 5-phosphate: step 6/6. Functionally, catalyzes the conversion of 1-hydroxy-2-methyl-2-(E)-butenyl 4-diphosphate (HMBPP) into a mixture of isopentenyl diphosphate (IPP) and dimethylallyl diphosphate (DMAPP). Acts in the terminal step of the DOXP/MEP pathway for isoprenoid precursor biosynthesis. This Prochlorococcus marinus (strain MIT 9313) protein is 4-hydroxy-3-methylbut-2-enyl diphosphate reductase.